We begin with the raw amino-acid sequence, 104 residues long: Protein MHF2 homolog (104 aa).

This sequence belongs to the CENP-X/MHF2 family.

It is found in the nucleus. Functionally, acts in the same pathway as FANCM to restrain class II meiotic crossing over (CO), and acts with FANCM during meiosis to repair interstrand cross-links (ICLs). This Arabidopsis thaliana (Mouse-ear cress) protein is Protein MHF2 homolog.